The following is a 152-amino-acid chain: MLMNSVIALTFLTASSNNGGLNIDVQQEEEKRINNDLNQYDTTLFNKDSKAVNDAIAKQKKERQQQIKNDMFQNQASHSTRLNETKKVLFSKSNLEKTSESDKSPYIQNKQEKKIFPYILMSVGAFLTLGFVIFSIHKGRRTKNESARKSNI.

At 1–114 (MLMNSVIALT…PYIQNKQEKK (114 aa)) the chain is on the cytoplasmic side. The disordered stretch occupies residues 62–83 (ERQQQIKNDMFQNQASHSTRLN). Residues 66-80 (QIKNDMFQNQASHST) are compositionally biased toward polar residues. The helical transmembrane segment at 115–135 (IFPYILMSVGAFLTLGFVIFS) threads the bilayer. At 136-152 (IHKGRRTKNESARKSNI) the chain is on the extracellular side.

The protein belongs to the EssA family.

It localises to the cell membrane. Its function is as follows. Component of the ESAT-6 secretion system (Ess). Required for the secretion of EsxA and EsxB. In Staphylococcus aureus (strain COL), this protein is ESAT-6 secretion machinery protein EssA.